The following is a 166-amino-acid chain: Putative peptidyl-prolyl cis-trans isomerase dodo (166 aa).

Residues glutamate 5–glutamate 39 enclose the WW domain. The disordered stretch occupies residues serine 32–aspartate 53. Residues alanine 44 to aspartate 53 show a composition bias toward gly residues. Residues proline 55–alanine 166 form the PpiC domain.

It carries out the reaction [protein]-peptidylproline (omega=180) = [protein]-peptidylproline (omega=0). The chain is Putative peptidyl-prolyl cis-trans isomerase dodo (dod) from Drosophila melanogaster (Fruit fly).